A 374-amino-acid chain; its full sequence is 4-hydroxy-3-methylbut-2-en-1-yl diphosphate synthase (flavodoxin) (374 aa).

[4Fe-4S] cluster is bound by residues cysteine 268, cysteine 271, cysteine 303, and glutamate 310.

It belongs to the IspG family. Requires [4Fe-4S] cluster as cofactor.

It carries out the reaction (2E)-4-hydroxy-3-methylbut-2-enyl diphosphate + oxidized [flavodoxin] + H2O + 2 H(+) = 2-C-methyl-D-erythritol 2,4-cyclic diphosphate + reduced [flavodoxin]. The protein operates within isoprenoid biosynthesis; isopentenyl diphosphate biosynthesis via DXP pathway; isopentenyl diphosphate from 1-deoxy-D-xylulose 5-phosphate: step 5/6. In terms of biological role, converts 2C-methyl-D-erythritol 2,4-cyclodiphosphate (ME-2,4cPP) into 1-hydroxy-2-methyl-2-(E)-butenyl 4-diphosphate. The protein is 4-hydroxy-3-methylbut-2-en-1-yl diphosphate synthase (flavodoxin) of Geobacillus thermodenitrificans (strain NG80-2).